The sequence spans 167 residues: Small ribosomal subunit protein uS5 (167 aa).

The S5 DRBM domain maps to 11–74 (LQEKLIAVNR…EKARRAMINV (64 aa)).

Belongs to the universal ribosomal protein uS5 family. In terms of assembly, part of the 30S ribosomal subunit. Contacts proteins S4 and S8.

Its function is as follows. With S4 and S12 plays an important role in translational accuracy. Located at the back of the 30S subunit body where it stabilizes the conformation of the head with respect to the body. The polypeptide is Small ribosomal subunit protein uS5 (Serratia proteamaculans (strain 568)).